The following is a 158-amino-acid chain: Transcription elongation factor GreA (158 aa).

Residues 4 to 75 (EKTYPMTQEG…TQLENMIRNA (72 aa)) adopt a coiled-coil conformation.

This sequence belongs to the GreA/GreB family.

Necessary for efficient RNA polymerase transcription elongation past template-encoded arresting sites. The arresting sites in DNA have the property of trapping a certain fraction of elongating RNA polymerases that pass through, resulting in locked ternary complexes. Cleavage of the nascent transcript by cleavage factors such as GreA or GreB allows the resumption of elongation from the new 3'terminus. GreA releases sequences of 2 to 3 nucleotides. The polypeptide is Transcription elongation factor GreA (Bacillus cereus (strain ATCC 10987 / NRS 248)).